The primary structure comprises 93 residues: Defensin-like protein 210 (93 aa).

The first 19 residues, 1-19, serve as a signal peptide directing secretion; sequence MKTIILFLTLLVISSSCTS. Intrachain disulfides connect Cys-63-Cys-80, Cys-66-Cys-85, and Cys-70-Cys-87.

This sequence belongs to the DEFL family.

The protein localises to the secreted. The protein is Defensin-like protein 210 of Arabidopsis thaliana (Mouse-ear cress).